The sequence spans 292 residues: MNNYTIKDITRASGGFAMLAVDQREAMRLMFAAAGAKTPVADSVLTDFKVNAAKILSPYASAVLLDQQFCYRQAVEQNAVAKSCAMIVAADDFIPGNGIPVDNVVIDKKINAQAVKRDGAKALKLLVLWRSDEDAQQRLDMVKEFNELCHSNGLLSIIEPVVRPPRCGDKFDREQAIIDAAKELGDSGADLYKVEMPLYGKGARSDLLTASQRLNGHINMPWVILSSGVDEKLFPRAVRVAMEAGASGFLAGRAVWSSVIGLPDTELMLRDVSAPKLQRLGEIVDEMMAKRR.

The active-site Schiff-base intermediate with substrate is Lys-193.

The protein belongs to the aldolase LacD family. In terms of assembly, homotetramer.

It carries out the reaction 6-deoxy-6-sulfo-D-fructose 1-phosphate = (2S)-3-sulfolactaldehyde + dihydroxyacetone phosphate. Cleaves 6-deoxy-6-sulfo-D-fructose 1-phosphate (SFP) to form dihydroxyacetone phosphate (DHAP) and 3-sulfolactaldehyde (SLA). This Salmonella typhi protein is Sulfofructosephosphate aldolase (yihT).